A 322-amino-acid chain; its full sequence is Probable cardiolipin synthase (CMP-forming) (322 aa).

Helical transmembrane passes span 143-163 (IGYVIVQGDFTLGMSLLAFAG), 199-219 (LVISLCYTDLLPMWLMGIVVF), and 289-309 (LQGLWYLTGLTTAATALSYVM).

It belongs to the CDP-alcohol phosphatidyltransferase class-I family.

The protein resides in the mitochondrion inner membrane. It catalyses the reaction a CDP-1,2-diacyl-sn-glycerol + a 1,2-diacyl-sn-glycero-3-phospho-(1'-sn-glycerol) = a cardiolipin + CMP + H(+). Functionally, catalyzes the synthesis of cardiolipin (CL) (diphosphatidylglycerol) by specifically transferring a phosphatidyl group from CDP-diacylglycerol to phosphatidylglycerol (PG). CL is a key phospholipid in mitochondrial membranes and plays important roles in maintaining the functional integrity and dynamics of mitochondria under both optimal and stress conditions. This Drosophila melanogaster (Fruit fly) protein is Probable cardiolipin synthase (CMP-forming) (CLS).